The following is a 374-amino-acid chain: DNA primase small subunit PriS (374 aa).

Active-site residues include Asp-99, Asp-101, and Asp-281.

The protein belongs to the eukaryotic-type primase small subunit family. In terms of assembly, heterodimer of a small subunit (PriS) and a large subunit (PriL). It depends on Mg(2+) as a cofactor. Mn(2+) is required as a cofactor.

Catalytic subunit of DNA primase, an RNA polymerase that catalyzes the synthesis of short RNA molecules used as primers for DNA polymerase during DNA replication. The small subunit contains the primase catalytic core and has DNA synthesis activity on its own. Binding to the large subunit stabilizes and modulates the activity, increasing the rate of DNA synthesis while decreasing the length of the DNA fragments, and conferring RNA synthesis capability. The DNA polymerase activity may enable DNA primase to also catalyze primer extension after primer synthesis. May also play a role in DNA repair. The polypeptide is DNA primase small subunit PriS (Methanoregula boonei (strain DSM 21154 / JCM 14090 / 6A8)).